Reading from the N-terminus, the 124-residue chain is Aspartate 1-decarboxylase (124 aa).

Ser-25 serves as the catalytic Schiff-base intermediate with substrate; via pyruvic acid. Ser-25 bears the Pyruvic acid (Ser) mark. Substrate is bound at residue Thr-57. Tyr-58 functions as the Proton donor in the catalytic mechanism. Substrate is bound at residue 73-75; that stretch reads GAA.

Belongs to the PanD family. Heterooctamer of four alpha and four beta subunits. Pyruvate is required as a cofactor. Is synthesized initially as an inactive proenzyme, which is activated by self-cleavage at a specific serine bond to produce a beta-subunit with a hydroxyl group at its C-terminus and an alpha-subunit with a pyruvoyl group at its N-terminus.

It localises to the cytoplasm. It catalyses the reaction L-aspartate + H(+) = beta-alanine + CO2. It functions in the pathway cofactor biosynthesis; (R)-pantothenate biosynthesis; beta-alanine from L-aspartate: step 1/1. Functionally, catalyzes the pyruvoyl-dependent decarboxylation of aspartate to produce beta-alanine. The protein is Aspartate 1-decarboxylase of Syntrophobacter fumaroxidans (strain DSM 10017 / MPOB).